The following is a 486-amino-acid chain: Aspartyl/glutamyl-tRNA(Asn/Gln) amidotransferase subunit B (486 aa).

The protein belongs to the GatB/GatE family. GatB subfamily. As to quaternary structure, heterotrimer of A, B and C subunits.

It catalyses the reaction L-glutamyl-tRNA(Gln) + L-glutamine + ATP + H2O = L-glutaminyl-tRNA(Gln) + L-glutamate + ADP + phosphate + H(+). The enzyme catalyses L-aspartyl-tRNA(Asn) + L-glutamine + ATP + H2O = L-asparaginyl-tRNA(Asn) + L-glutamate + ADP + phosphate + 2 H(+). Its function is as follows. Allows the formation of correctly charged Asn-tRNA(Asn) or Gln-tRNA(Gln) through the transamidation of misacylated Asp-tRNA(Asn) or Glu-tRNA(Gln) in organisms which lack either or both of asparaginyl-tRNA or glutaminyl-tRNA synthetases. The reaction takes place in the presence of glutamine and ATP through an activated phospho-Asp-tRNA(Asn) or phospho-Glu-tRNA(Gln). The chain is Aspartyl/glutamyl-tRNA(Asn/Gln) amidotransferase subunit B from Azoarcus sp. (strain BH72).